Consider the following 213-residue polypeptide: Protein ras-1 (213 aa).

Residue 15-22 (GGGGVGKS) coordinates GTP. The short motif at 37 to 45 (YDPTIEDSY) is the Effector region element. GTP is bound by residues 62-66 (DTAGQ) and 121-124 (NKYD). Cysteine 210 carries the cysteine methyl ester modification. Cysteine 210 carries S-farnesyl cysteine lipidation. Positions 211–213 (IMM) are cleaved as a propeptide — removed in mature form.

This sequence belongs to the small GTPase superfamily. Ras family.

The protein localises to the cell membrane. The enzyme catalyses GTP + H2O = GDP + phosphate + H(+). Functionally, ras proteins bind GDP/GTP and possess intrinsic GTPase activity. This is Protein ras-1 (ras-1) from Neurospora crassa (strain ATCC 24698 / 74-OR23-1A / CBS 708.71 / DSM 1257 / FGSC 987).